Consider the following 488-residue polypeptide: Phenylalanine--tRNA ligase alpha subunit (488 aa).

Residues threonine 315, 354 to 356 (QLD), phenylalanine 394, and phenylalanine 419 each bind L-phenylalanine.

It belongs to the class-II aminoacyl-tRNA synthetase family. Phe-tRNA synthetase alpha subunit type 2 subfamily. Tetramer of two alpha and two beta subunits. Mg(2+) is required as a cofactor.

The protein localises to the cytoplasm. The catalysed reaction is tRNA(Phe) + L-phenylalanine + ATP = L-phenylalanyl-tRNA(Phe) + AMP + diphosphate + H(+). The sequence is that of Phenylalanine--tRNA ligase alpha subunit from Pyrobaculum arsenaticum (strain DSM 13514 / JCM 11321 / PZ6).